The chain runs to 368 residues: Quinolinate synthase (368 aa).

2 residues coordinate iminosuccinate: H46 and S63. Residue C110 coordinates [4Fe-4S] cluster. Iminosuccinate-binding positions include 141-143 (YVN) and S162. C230 lines the [4Fe-4S] cluster pocket. Iminosuccinate is bound by residues 256-258 (HPE) and T273. A [4Fe-4S] cluster-binding site is contributed by C320.

It belongs to the quinolinate synthase family. Type 3 subfamily. [4Fe-4S] cluster serves as cofactor.

It localises to the cytoplasm. The enzyme catalyses iminosuccinate + dihydroxyacetone phosphate = quinolinate + phosphate + 2 H2O + H(+). The protein operates within cofactor biosynthesis; NAD(+) biosynthesis; quinolinate from iminoaspartate: step 1/1. In terms of biological role, catalyzes the condensation of iminoaspartate with dihydroxyacetone phosphate to form quinolinate. The sequence is that of Quinolinate synthase from Bacillus anthracis (strain A0248).